Reading from the N-terminus, the 141-residue chain is MKSKKQILRLRKRAEFLTVRNGEKRRGPLFLMEVRERTEEESNAAKTGDNPRVGFTVTKKNGNAVIRNRIRRRLKEAIRCHAGRDMAPSTDYVIVAREQALNAPFSQLTEELSRRITAKGERRSGRKRRTERPEPGPVNGK.

Disordered stretches follow at residues 37 to 56 (RTEE…VGFT) and 114 to 141 (RRIT…VNGK). The span at 114–123 (RRITAKGERR) shows a compositional bias: basic and acidic residues.

It belongs to the RnpA family. As to quaternary structure, consists of a catalytic RNA component (M1 or rnpB) and a protein subunit.

It catalyses the reaction Endonucleolytic cleavage of RNA, removing 5'-extranucleotides from tRNA precursor.. In terms of biological role, RNaseP catalyzes the removal of the 5'-leader sequence from pre-tRNA to produce the mature 5'-terminus. It can also cleave other RNA substrates such as 4.5S RNA. The protein component plays an auxiliary but essential role in vivo by binding to the 5'-leader sequence and broadening the substrate specificity of the ribozyme. The sequence is that of Ribonuclease P protein component from Brucella suis biovar 1 (strain 1330).